The primary structure comprises 638 residues: 3D-(3,5/4)-trihydroxycyclohexane-1,2-dione hydrolase (638 aa).

Glu-67 contributes to the thiamine diphosphate binding site. The tract at residues 442-523 is thiamine pyrophosphate binding; the sequence is SLPGDLQRLW…INIMLFDNSG (82 aa). Asp-494 and Asn-521 together coordinate Mg(2+).

The protein belongs to the TPP enzyme family. It depends on Mg(2+) as a cofactor. The cofactor is thiamine diphosphate.

It catalyses the reaction 3D-3,5/4-trihydroxycyclohexane-1,2-dione + H2O = 5-deoxy-D-glucuronate + H(+). It functions in the pathway polyol metabolism; myo-inositol degradation into acetyl-CoA; acetyl-CoA from myo-inositol: step 3/7. In terms of biological role, involved in the cleavage of the C1-C2 bond of 3D-(3,5/4)-trihydroxycyclohexane-1,2-dione (THcHDO) to yield 5-deoxy-glucuronate (5DG). The sequence is that of 3D-(3,5/4)-trihydroxycyclohexane-1,2-dione hydrolase from Listeria innocua serovar 6a (strain ATCC BAA-680 / CLIP 11262).